The sequence spans 140 residues: uncharacterized protein (140 aa).

This is an uncharacterized protein from Acidianus ambivalens (Desulfurolobus ambivalens).